Reading from the N-terminus, the 473-residue chain is Photosystem II CP43 reaction center protein (473 aa).

A propeptide spanning residues 1-14 (MKTLYSLRRFSHVE) is cleaved from the precursor. Residue threonine 15 is modified to N-acetylthreonine. Threonine 15 carries the post-translational modification Phosphothreonine. The next 5 helical transmembrane spans lie at 69–93 (LFEVAHFGPEKPMYEQGLILLPHLA), 134–155 (LLGPEIIEESFPLFRYVWKDRN), 178–200 (KALYFGGVYDTWAPGGGDVRKIT), 255–275 (KPFAWARRALVWSGEAYLSYS), and 291–312 (WFNNTAYPSEFYGPTGPEASQA). Glutamate 367 contacts [CaMn4O5] cluster. The chain crosses the membrane as a helical span at residues 447–471 (RARAAAAGFEKGIDRDFEPVLSMTP).

This sequence belongs to the PsbB/PsbC family. PsbC subfamily. As to quaternary structure, PSII is composed of 1 copy each of membrane proteins PsbA, PsbB, PsbC, PsbD, PsbE, PsbF, PsbH, PsbI, PsbJ, PsbK, PsbL, PsbM, PsbT, PsbX, PsbY, PsbZ, Psb30/Ycf12, at least 3 peripheral proteins of the oxygen-evolving complex and a large number of cofactors. It forms dimeric complexes. The cofactor is Binds multiple chlorophylls and provides some of the ligands for the Ca-4Mn-5O cluster of the oxygen-evolving complex. It may also provide a ligand for a Cl- that is required for oxygen evolution. PSII binds additional chlorophylls, carotenoids and specific lipids..

The protein resides in the plastid membrane. One of the components of the core complex of photosystem II (PSII). It binds chlorophyll and helps catalyze the primary light-induced photochemical processes of PSII. PSII is a light-driven water:plastoquinone oxidoreductase, using light energy to abstract electrons from H(2)O, generating O(2) and a proton gradient subsequently used for ATP formation. This Cuscuta gronovii (Common dodder) protein is Photosystem II CP43 reaction center protein.